Here is a 184-residue protein sequence, read N- to C-terminus: Ribosome maturation factor RimM (184 aa).

The PRC barrel domain maps to 106-184 (PGDYYWYQLE…RMIVDWDPEF (79 aa)).

Belongs to the RimM family. Binds ribosomal protein uS19.

The protein resides in the cytoplasm. An accessory protein needed during the final step in the assembly of 30S ribosomal subunit, possibly for assembly of the head region. Essential for efficient processing of 16S rRNA. May be needed both before and after RbfA during the maturation of 16S rRNA. It has affinity for free ribosomal 30S subunits but not for 70S ribosomes. The protein is Ribosome maturation factor RimM of Chromohalobacter salexigens (strain ATCC BAA-138 / DSM 3043 / CIP 106854 / NCIMB 13768 / 1H11).